Consider the following 160-residue polypeptide: Large ribosomal subunit protein uL22c (160 aa).

This sequence belongs to the universal ribosomal protein uL22 family. In terms of assembly, part of the 50S ribosomal subunit.

It is found in the plastid. It localises to the chloroplast. Its function is as follows. This protein binds specifically to 23S rRNA. In terms of biological role, the globular domain of the protein is located near the polypeptide exit tunnel on the outside of the subunit, while an extended beta-hairpin is found that lines the wall of the exit tunnel in the center of the 70S ribosome. This is Large ribosomal subunit protein uL22c (rpl22) from Panax ginseng (Korean ginseng).